Here is a 371-residue protein sequence, read N- to C-terminus: Histidinol-phosphate aminotransferase (371 aa).

An N6-(pyridoxal phosphate)lysine modification is found at lysine 229.

Belongs to the class-II pyridoxal-phosphate-dependent aminotransferase family. Histidinol-phosphate aminotransferase subfamily. Homodimer. Pyridoxal 5'-phosphate is required as a cofactor.

The enzyme catalyses L-histidinol phosphate + 2-oxoglutarate = 3-(imidazol-4-yl)-2-oxopropyl phosphate + L-glutamate. The protein operates within amino-acid biosynthesis; L-histidine biosynthesis; L-histidine from 5-phospho-alpha-D-ribose 1-diphosphate: step 7/9. This is Histidinol-phosphate aminotransferase from Roseiflexus castenholzii (strain DSM 13941 / HLO8).